Consider the following 209-residue polypeptide: Orotate phosphoribosyltransferase (209 aa).

5-phospho-alpha-D-ribose 1-diphosphate is bound by residues arginine 96, lysine 100, histidine 102, and 122–130 (EDLISTGGS). Serine 126 lines the orotate pocket.

This sequence belongs to the purine/pyrimidine phosphoribosyltransferase family. PyrE subfamily. In terms of assembly, homodimer. It depends on Mg(2+) as a cofactor.

The enzyme catalyses orotidine 5'-phosphate + diphosphate = orotate + 5-phospho-alpha-D-ribose 1-diphosphate. It participates in pyrimidine metabolism; UMP biosynthesis via de novo pathway; UMP from orotate: step 1/2. Functionally, catalyzes the transfer of a ribosyl phosphate group from 5-phosphoribose 1-diphosphate to orotate, leading to the formation of orotidine monophosphate (OMP). This chain is Orotate phosphoribosyltransferase, found in Streptococcus thermophilus (strain ATCC BAA-491 / LMD-9).